Here is a 1197-residue protein sequence, read N- to C-terminus: Probable DNA polymerase (1197 aa).

This sequence belongs to the DNA polymerase type-B family.

It is found in the mitochondrion. The enzyme catalyses DNA(n) + a 2'-deoxyribonucleoside 5'-triphosphate = DNA(n+1) + diphosphate. The sequence is that of Probable DNA polymerase from Podospora anserina (Pleurage anserina).